We begin with the raw amino-acid sequence, 327 residues long: Interleukin-12 subunit beta (327 aa).

A signal peptide spans 1–22; that stretch reads MCLQQLVISWVSLVWLASPLLA. An Ig-like C2-type domain is found at 23-106; sequence IWELEKNVYV…LSQMLLLLHK (84 aa). An intrachain disulfide couples Cys50 to Cys90. Residues Asn134 and Asn152 are each glycosylated (N-linked (GlcNAc...) asparagine). The 91-residue stretch at 237-327 folds into the Fibronectin type-III domain; the sequence is PPKNLKMKPS…WSEWATMSCP (91 aa).

Belongs to the IL-12B family. Heterodimer with IL12A; disulfide-linked. The heterodimer is known as interleukin IL-12. Heterodimer with IL23A; disulfide-linked. The heterodimer is known as interleukin IL-23. Also secreted as a monomer. Interacts with NBR1; this interaction promotes IL-12 secretion.

The protein resides in the secreted. Its function is as follows. Cytokine that can act as a growth factor for activated T and NK cells, enhance the lytic activity of NK/lymphokine-activated killer cells, and stimulate the production of IFN-gamma by resting PBMC. Associates with IL23A to form the IL-23 interleukin, a heterodimeric cytokine which functions in innate and adaptive immunity. IL-23 may constitute with IL-17 an acute response to infection in peripheral tissues. IL-23 binds to a heterodimeric receptor complex composed of IL12RB1 and IL23R, activates the Jak-Stat signaling cascade, stimulates memory rather than naive T-cells and promotes production of pro-inflammatory cytokines. IL-23 induces autoimmune inflammation and thus may be responsible for autoimmune inflammatory diseases and may be important for tumorigenesis. This is Interleukin-12 subunit beta (IL12B) from Marmota monax (Woodchuck).